Reading from the N-terminus, the 129-residue chain is Glycine cleavage system H protein (129 aa).

The Lipoyl-binding domain maps to Leu-24–Arg-106. Lys-65 carries the post-translational modification N6-lipoyllysine.

The protein belongs to the GcvH family. In terms of assembly, the glycine cleavage system is composed of four proteins: P, T, L and H. It depends on (R)-lipoate as a cofactor.

Functionally, the glycine cleavage system catalyzes the degradation of glycine. The H protein shuttles the methylamine group of glycine from the P protein to the T protein. The polypeptide is Glycine cleavage system H protein (Prochlorococcus marinus (strain MIT 9303)).